The chain runs to 199 residues: Fe/S biogenesis protein NfuA (199 aa).

Positions 151 and 154 each coordinate [4Fe-4S] cluster.

This sequence belongs to the NfuA family. Homodimer. It depends on [4Fe-4S] cluster as a cofactor.

Involved in iron-sulfur cluster biogenesis. Binds a 4Fe-4S cluster, can transfer this cluster to apoproteins, and thereby intervenes in the maturation of Fe/S proteins. Could also act as a scaffold/chaperone for damaged Fe/S proteins. This Xanthomonas euvesicatoria pv. vesicatoria (strain 85-10) (Xanthomonas campestris pv. vesicatoria) protein is Fe/S biogenesis protein NfuA.